Reading from the N-terminus, the 179-residue chain is uncharacterized protein (179 aa).

The N-terminal stretch at 1–26 is a signal peptide; sequence MKKNMILFFGILKKLLICILKMEIKC.

This is an uncharacterized protein from Acheta domesticus (House cricket).